A 150-amino-acid chain; its full sequence is Holo-[acyl-carrier-protein] synthase (150 aa).

Mg(2+)-binding residues include D8 and E57.

This sequence belongs to the P-Pant transferase superfamily. AcpS family. Mg(2+) serves as cofactor.

It localises to the cytoplasm. It catalyses the reaction apo-[ACP] + CoA = holo-[ACP] + adenosine 3',5'-bisphosphate + H(+). Its function is as follows. Transfers the 4'-phosphopantetheine moiety from coenzyme A to a Ser of acyl-carrier-protein. This Jannaschia sp. (strain CCS1) protein is Holo-[acyl-carrier-protein] synthase.